A 424-amino-acid chain; its full sequence is Glutamyl-tRNA reductase (424 aa).

Substrate-binding positions include 49 to 52 (TCNR), serine 109, 114 to 116 (EDQ), and glutamine 120. Residue cysteine 50 is the Nucleophile of the active site. 189 to 194 (GFGKMS) provides a ligand contact to NADP(+).

It belongs to the glutamyl-tRNA reductase family. As to quaternary structure, homodimer.

The catalysed reaction is (S)-4-amino-5-oxopentanoate + tRNA(Glu) + NADP(+) = L-glutamyl-tRNA(Glu) + NADPH + H(+). Its pathway is porphyrin-containing compound metabolism; protoporphyrin-IX biosynthesis; 5-aminolevulinate from L-glutamyl-tRNA(Glu): step 1/2. Functionally, catalyzes the NADPH-dependent reduction of glutamyl-tRNA(Glu) to glutamate 1-semialdehyde (GSA). The sequence is that of Glutamyl-tRNA reductase from Alkaliphilus metalliredigens (strain QYMF).